The following is a 407-amino-acid chain: Proteasome-activating nucleotidase (407 aa).

A coiled-coil region spans residues 22 to 67 (KEKTQIAELESKVLRLELKNKDISRENVQIKKENEILKRELDKLRI). Residues 192 to 197 (GTGKTL) and H331 each bind ATP. Residues 405–407 (MYG) form a docks into pockets in the proteasome alpha-ring to cause gate opening region.

It belongs to the AAA ATPase family. Homohexamer. The hexameric complex has a two-ring architecture resembling a top hat that caps the 20S proteasome core at one or both ends. Upon ATP-binding, the C-terminus of PAN interacts with the alpha-rings of the proteasome core by binding to the intersubunit pockets.

It is found in the cytoplasm. In terms of biological role, ATPase which is responsible for recognizing, binding, unfolding and translocation of substrate proteins into the archaeal 20S proteasome core particle. Is essential for opening the gate of the 20S proteasome via an interaction with its C-terminus, thereby allowing substrate entry and access to the site of proteolysis. Thus, the C-termini of the proteasomal ATPase function like a 'key in a lock' to induce gate opening and therefore regulate proteolysis. Unfolding activity requires energy from ATP hydrolysis, whereas ATP binding alone promotes ATPase-20S proteasome association which triggers gate opening, and supports translocation of unfolded substrates. This Methanococcus maripaludis (strain C6 / ATCC BAA-1332) protein is Proteasome-activating nucleotidase.